Consider the following 494-residue polypeptide: Cytochrome P450 2A11 (494 aa).

Lys-379 carries the post-translational modification N6-acetyllysine. Heme is bound at residue Cys-439.

The protein belongs to the cytochrome P450 family. Heme serves as cofactor. In terms of tissue distribution, expressed in liver and lung as well as in nasal tissues.

It is found in the endoplasmic reticulum membrane. The protein resides in the microsome membrane. The catalysed reaction is an organic molecule + reduced [NADPH--hemoprotein reductase] + O2 = an alcohol + oxidized [NADPH--hemoprotein reductase] + H2O + H(+). Its function is as follows. Catalyzes the oxygenation of a variety of substrates, including ethanol and procarcinogens such as N-nitrosodiethylamine and phenacetin. Has no or little activity as a coumarin 7-hydroxylase and in the formation of androstenedione from testosterone. This chain is Cytochrome P450 2A11 (CYP2A11), found in Oryctolagus cuniculus (Rabbit).